We begin with the raw amino-acid sequence, 437 residues long: Probable glycine dehydrogenase (decarboxylating) subunit 1 (437 aa).

It belongs to the GcvP family. N-terminal subunit subfamily. As to quaternary structure, the glycine cleavage system is composed of four proteins: P, T, L and H. In this organism, the P 'protein' is a heterodimer of two subunits.

It catalyses the reaction N(6)-[(R)-lipoyl]-L-lysyl-[glycine-cleavage complex H protein] + glycine + H(+) = N(6)-[(R)-S(8)-aminomethyldihydrolipoyl]-L-lysyl-[glycine-cleavage complex H protein] + CO2. Functionally, the glycine cleavage system catalyzes the degradation of glycine. The P protein binds the alpha-amino group of glycine through its pyridoxal phosphate cofactor; CO(2) is released and the remaining methylamine moiety is then transferred to the lipoamide cofactor of the H protein. The chain is Probable glycine dehydrogenase (decarboxylating) subunit 1 from Thermotoga maritima (strain ATCC 43589 / DSM 3109 / JCM 10099 / NBRC 100826 / MSB8).